Consider the following 101-residue polypeptide: Small ribosomal subunit protein uS10 (101 aa).

Belongs to the universal ribosomal protein uS10 family. In terms of assembly, part of the 30S ribosomal subunit.

Involved in the binding of tRNA to the ribosomes. This chain is Small ribosomal subunit protein uS10, found in Methanocaldococcus jannaschii (strain ATCC 43067 / DSM 2661 / JAL-1 / JCM 10045 / NBRC 100440) (Methanococcus jannaschii).